The primary structure comprises 69 residues: UPF0337 protein XAC4007 (69 aa).

The protein belongs to the UPF0337 (CsbD) family.

The protein is UPF0337 protein XAC4007 of Xanthomonas axonopodis pv. citri (strain 306).